The sequence spans 437 residues: 26S proteasome subunit RPT4 (437 aa).

A disordered region spans residues 1–51; it reads MSEEQDPLLAGLGETSGDNHTQQSHEQQPEQPQETEEHHEEEPSRVDPEQE. Serine 2 is subject to N-acetylserine. Positions 20-32 are enriched in low complexity; the sequence is HTQQSHEQQPEQP. Over residues 35-51 the composition is skewed to basic and acidic residues; it reads TEEHHEEEPSRVDPEQE. 222 to 229 contacts ATP; sequence GPPGTGKT.

This sequence belongs to the AAA ATPase family. Post-translationally, N-acetylated by NAT1.

In terms of biological role, the 26S proteasome is involved in the ATP-dependent degradation of ubiquitinated proteins. The regulatory (or ATPase) complex confers ATP dependency and substrate specificity to the 26S complex. This Saccharomyces cerevisiae (strain ATCC 204508 / S288c) (Baker's yeast) protein is 26S proteasome subunit RPT4 (RPT4).